A 399-amino-acid polypeptide reads, in one-letter code: MQSLSLGQTSISKGLNYLTIMAPGNLWHMRNNFLFGSRCWMTRFSAENIFKSVSFRLFGVKCHNTDSEPLKNEDLLKNLLTMGVDIDMARKRQPGVFHRMITNEQDLKMFLLSKGASKEVIASIISRYPRAITRTPENLSKRWDLWRKIVTSDLEIVNILERSPESFFRSNNNLNLENNIKFLYSVGLTRKCLCRLLTNAPRTFSNSLDLNKQMVEFLQAAGLSLGHNDPADFVRKIIFKNPFILIQSTKRVKANIEFLRSTFNLNSEELLVLICGPGAEILDLSNDYARRSYANIKEKLFSLGCTEEEVQKFVLSYPDVIFLAEKKFNDKIDCLMEENISISQIIENPRVLDSSISTLKSRIKELVNAGCNLSTLNITLLSWSKKRYEAKLKKLSRFA.

A mitochondrion-targeting transit peptide spans Met-1 to Leu-57. 5 interaction with DNA regions span residues Arg-169 to Ser-170, Gln-247 to Arg-251, Ala-324 to Lys-331, Ser-355 to Thr-358, and Ser-384 to Lys-391.

This sequence belongs to the mTERF family. In terms of assembly, monomer. Post-translationally, phosphoprotein with mostly four phosphate groups. While the DNA-binding activity is unaffected by the phosphorylation state, only the phosphorylated form of the protein is active for termination activity. Functioning seems to be regulated by phosphorylation.

Its subcellular location is the mitochondrion. Functionally, transcription termination factor. Binds to a 28 bp region within the tRNA(Leu(uur)) gene at a position immediately adjacent to and downstream of the 16S rRNA gene; this region comprises a tridecamer sequence critical for directing accurate termination. Binds DNA along the major grove and promotes DNA bending and partial unwinding. Promotes base flipping. Transcription termination activity appears to be polarized with highest specificity for transcripts initiated on the light strand. This is Transcription termination factor 1, mitochondrial (MTERF1) from Homo sapiens (Human).